We begin with the raw amino-acid sequence, 269 residues long: Calretinin (269 aa).

6 EF-hand domains span residues 14-49 (LSAS…LESA), 61-96 (SLGD…EENF), 105-140 (GSSS…LLKK), 149-184 (KLQE…QENF), 193-228 (LSSE…LYEK), and 230-265 (KKEM…VLCS). Residues aspartate 27, aspartate 29, asparagine 31, tyrosine 33, glutamate 38, aspartate 74, asparagine 76, aspartate 78, lysine 80, glutamate 85, aspartate 118, aspartate 120, serine 122, tyrosine 124, glutamate 129, aspartate 162, asparagine 164, aspartate 166, lysine 168, glutamate 173, aspartate 206, aspartate 208, serine 210, and glutamate 217 each coordinate Ca(2+).

The protein belongs to the calbindin family.

The protein localises to the synapse. Its subcellular location is the cell projection. It localises to the dendrite. Its function is as follows. Calcium-binding protein involved in calcium homeostasis and signal transduction. It plays a critical role in buffering intracellular calcium levels and modulating calcium-dependent signaling pathways. Predominantly expressed in specific neuronal populations, influences synaptic plasticity and neuronal excitability, contributing to learning and memory. During embryonic development, it facilitates neuronal differentiation and maturation. This Gallus gallus (Chicken) protein is Calretinin (CALB2).